A 223-amino-acid polypeptide reads, in one-letter code: Deoxyribose-phosphate aldolase 1 (223 aa).

Catalysis depends on Asp91, which acts as the Proton donor/acceptor. Lys154 serves as the catalytic Schiff-base intermediate with acetaldehyde. Lys183 functions as the Proton donor/acceptor in the catalytic mechanism.

It belongs to the DeoC/FbaB aldolase family. DeoC type 1 subfamily.

Its subcellular location is the cytoplasm. It carries out the reaction 2-deoxy-D-ribose 5-phosphate = D-glyceraldehyde 3-phosphate + acetaldehyde. The protein operates within carbohydrate degradation; 2-deoxy-D-ribose 1-phosphate degradation; D-glyceraldehyde 3-phosphate and acetaldehyde from 2-deoxy-alpha-D-ribose 1-phosphate: step 2/2. Catalyzes a reversible aldol reaction between acetaldehyde and D-glyceraldehyde 3-phosphate to generate 2-deoxy-D-ribose 5-phosphate. This chain is Deoxyribose-phosphate aldolase 1, found in Bacillus licheniformis (strain ATCC 14580 / DSM 13 / JCM 2505 / CCUG 7422 / NBRC 12200 / NCIMB 9375 / NCTC 10341 / NRRL NRS-1264 / Gibson 46).